The primary structure comprises 282 residues: 4-hydroxy-tetrahydrodipicolinate reductase (282 aa).

12–17 (GVTGRM) lines the NAD(+) pocket. Arg44 serves as a coordination point for NADP(+). NAD(+) contacts are provided by residues 107 to 109 (GTT) and 131 to 134 (SSNF). Catalysis depends on His164, which acts as the Proton donor/acceptor. His165 serves as a coordination point for (S)-2,3,4,5-tetrahydrodipicolinate. The active-site Proton donor is Lys168. 174–175 (GT) provides a ligand contact to (S)-2,3,4,5-tetrahydrodipicolinate.

It belongs to the DapB family. In terms of assembly, homotetramer.

The protein localises to the cytoplasm. It carries out the reaction (S)-2,3,4,5-tetrahydrodipicolinate + NAD(+) + H2O = (2S,4S)-4-hydroxy-2,3,4,5-tetrahydrodipicolinate + NADH + H(+). The enzyme catalyses (S)-2,3,4,5-tetrahydrodipicolinate + NADP(+) + H2O = (2S,4S)-4-hydroxy-2,3,4,5-tetrahydrodipicolinate + NADPH + H(+). The protein operates within amino-acid biosynthesis; L-lysine biosynthesis via DAP pathway; (S)-tetrahydrodipicolinate from L-aspartate: step 4/4. Catalyzes the conversion of 4-hydroxy-tetrahydrodipicolinate (HTPA) to tetrahydrodipicolinate. The sequence is that of 4-hydroxy-tetrahydrodipicolinate reductase from Blochmanniella pennsylvanica (strain BPEN).